Here is a 182-residue protein sequence, read N- to C-terminus: Glycerol-3-phosphate acyltransferase 1 (182 aa).

The next 5 helical transmembrane spans lie at 5–25 (MQFL…AYIV), 54–74 (GYFI…VSIA), 81–101 (STFV…PIVF), 117–137 (IAFD…FYLI), and 157–177 (ILYS…VLIL).

Belongs to the PlsY family. As to quaternary structure, probably interacts with PlsX.

The protein localises to the cell membrane. The catalysed reaction is an acyl phosphate + sn-glycerol 3-phosphate = a 1-acyl-sn-glycero-3-phosphate + phosphate. The protein operates within lipid metabolism; phospholipid metabolism. In terms of biological role, catalyzes the transfer of an acyl group from acyl-phosphate (acyl-PO(4)) to glycerol-3-phosphate (G3P) to form lysophosphatidic acid (LPA). This enzyme utilizes acyl-phosphate as fatty acyl donor, but not acyl-CoA or acyl-ACP. The polypeptide is Glycerol-3-phosphate acyltransferase 1 (Bacillus cereus (strain ATCC 10987 / NRS 248)).